A 364-amino-acid polypeptide reads, in one-letter code: Ribosomal RNA small subunit methyltransferase H (364 aa).

S-adenosyl-L-methionine-binding positions include 55–57 (GGH), aspartate 75, phenylalanine 101, aspartate 122, and glutamine 129. The interval 333 to 364 (LPPGGGAGFVKAGRVPGEPVRGTRAGSKGRRR) is disordered.

The protein belongs to the methyltransferase superfamily. RsmH family.

The protein localises to the cytoplasm. The enzyme catalyses cytidine(1402) in 16S rRNA + S-adenosyl-L-methionine = N(4)-methylcytidine(1402) in 16S rRNA + S-adenosyl-L-homocysteine + H(+). In terms of biological role, specifically methylates the N4 position of cytidine in position 1402 (C1402) of 16S rRNA. In Bordetella bronchiseptica (strain ATCC BAA-588 / NCTC 13252 / RB50) (Alcaligenes bronchisepticus), this protein is Ribosomal RNA small subunit methyltransferase H.